The sequence spans 186 residues: Elongation factor P (186 aa).

It belongs to the elongation factor P family.

The protein localises to the cytoplasm. It functions in the pathway protein biosynthesis; polypeptide chain elongation. Functionally, involved in peptide bond synthesis. Stimulates efficient translation and peptide-bond synthesis on native or reconstituted 70S ribosomes in vitro. Probably functions indirectly by altering the affinity of the ribosome for aminoacyl-tRNA, thus increasing their reactivity as acceptors for peptidyl transferase. The protein is Elongation factor P of Acidobacterium capsulatum (strain ATCC 51196 / DSM 11244 / BCRC 80197 / JCM 7670 / NBRC 15755 / NCIMB 13165 / 161).